The following is a 253-amino-acid chain: MSWIPFKIGQPKKQIVSKTVERDFEREYGKLQQLEEQTKRLQKDMKKSTDADLAMSKSAVKISLDLLSNPLCEQDQDFLRMVTALDTAMKRMDAFNQEKVNQIQKTVIEPLKKFGSIFPSLNMAVKRREQALQDYGRLQAKVEKYEEKEKTGPVLAKLHQAREELRPVREDFEAKNKQLLDEMPRFYNSRLDYFQPSFESLIRAQVIYYSEMHKIFGDLTQQLDQPGHSDEHRERENETKLSELRALSIVADD.

Positions 9–232 (GQPKKQIVSK…LDQPGHSDEH (224 aa)) constitute a BAR domain. Coiled coils occupy residues 16 to 57 (VSKT…AMSK) and 120 to 151 (SLNM…KEKT).

The protein localises to the cytoplasm. Its subcellular location is the cytoskeleton. Its function is as follows. Involved in cytokinesis and septation where it has a role in the localization of F-actin. This chain is Bridging integrator 3 (Bin3), found in Rattus norvegicus (Rat).